A 254-amino-acid chain; its full sequence is Geranylgeranylglyceryl phosphate synthase (254 aa).

2 residues coordinate Mg(2+): Asp-28 and Ser-53. Sn-glycerol 1-phosphate-binding positions include 172–178 (YLEAGSG), 203–204 (GG), and 225–226 (GT).

It belongs to the GGGP/HepGP synthase family. Group II subfamily. Requires Mg(2+) as cofactor.

Its subcellular location is the cytoplasm. It carries out the reaction sn-glycerol 1-phosphate + (2E,6E,10E)-geranylgeranyl diphosphate = sn-3-O-(geranylgeranyl)glycerol 1-phosphate + diphosphate. The protein operates within membrane lipid metabolism; glycerophospholipid metabolism. Its function is as follows. Prenyltransferase that catalyzes the transfer of the geranylgeranyl moiety of geranylgeranyl diphosphate (GGPP) to the C3 hydroxyl of sn-glycerol-1-phosphate (G1P). This reaction is the first ether-bond-formation step in the biosynthesis of archaeal membrane lipids. This is Geranylgeranylglyceryl phosphate synthase from Methanococcus vannielii (strain ATCC 35089 / DSM 1224 / JCM 13029 / OCM 148 / SB).